The following is an 82-amino-acid chain: STGEELFKAKACVACHSVDKKLVGPAFHDVAAKYGAQGDGVAHITNSIKTGSKGNWGPIPMPPNAVSPEEAKTLAEWIVTLK.

Residues C12, C15, H16, and M61 each contribute to the heme c site.

In terms of processing, binds 1 heme c group covalently per subunit.

In terms of biological role, this is a prokaryotic monoheme cytochrome, unreactive with mitochondrial cytochrome C oxidase or reductase. It functions in nitrite and nitrate respiration in Pseudomonas, but it is also found in other bacteria. This Pseudomonas denitrificans protein is Cytochrome c-551.